The following is a 343-amino-acid chain: 7-epi-alpha-eudesmol synthase ((2E,6E)-farnesyl diphosphate cyclizing) (343 aa).

Residues aspartate 80 and aspartate 84 each coordinate Mg(2+). Positions 80-84 (DDQFD) match the DDXXD motif motif. Arginine 177 is a binding site for substrate. Asparagine 223 and serine 227 together coordinate Mg(2+). Residue arginine 230 coordinates substrate. Position 231 (glutamate 231) interacts with Mg(2+). 317–318 (RY) provides a ligand contact to substrate.

It belongs to the terpene synthase family. Mg(2+) is required as a cofactor.

It catalyses the reaction (2E,6E)-farnesyl diphosphate + H2O = 7-epi-alpha-eudesmol + diphosphate. It functions in the pathway secondary metabolite biosynthesis; terpenoid biosynthesis. Its function is as follows. Catalyzes the conversion of (2E,6E)-farnesyl diphosphate (FPP) to yield the bicyclic sesquiterpenol 7-epi-alpha-eudesmol via a 1,10-cyclization, which requires the abstraction of the pyrophosphate from FPP to yield the (E,E)-germacradienyl cation. The only accepted substrate is (2E,6E)-farnesyl diphosphate (FPP). The polypeptide is 7-epi-alpha-eudesmol synthase ((2E,6E)-farnesyl diphosphate cyclizing) (Streptomyces viridochromogenes (strain DSM 40736 / JCM 4977 / BCRC 1201 / Tue 494)).